The sequence spans 218 residues: Putative glutamine transport system permease protein GlnP (218 aa).

An ABC transmembrane type-1 domain is found at 19-208 (TLVTLKYSII…ILVMLISFIA (190 aa)). The next 4 membrane-spanning stretches (helical) occupy residues 25–45 (YSII…ICKV), 57–79 (FYTS…FAAP), 86–108 (FSVF…SEVI), and 187–207 (FFPM…ISFI).

It belongs to the binding-protein-dependent transport system permease family. HisMQ subfamily.

It is found in the cell inner membrane. Its function is as follows. Part of the binding-protein-dependent transport system for glutamine; probably responsible for the translocation of the substrate across the membrane. In Rickettsia typhi (strain ATCC VR-144 / Wilmington), this protein is Putative glutamine transport system permease protein GlnP (glnP).